The following is a 1327-amino-acid chain: ABC transporter 1 (1327 aa).

Helical transmembrane passes span 47–67 (LGIL…IIFG), 100–120 (VYVG…WNLF), 170–190 (KVGI…IAFV), 195–215 (LGGE…VGGY), 228–248 (VAGA…VHAF), and 276–296 (VAVQ…LAFW). One can recognise an ABC transmembrane type-1 1 domain in the interval 47–326 (LGILAAIASG…TTYTVIFLLV (280 aa)). Residues Asn381, Asn390, and Asn406 are each glycosylated (N-linked (GlcNAc...) asparagine). An ABC transporter 1 domain is found at 386–663 (IELNNVSFAF…DGAYAGLVRL (278 aa)). 421–428 (GLSGSGKS) is a binding site for ATP. N-linked (GlcNAc...) asparagine glycans are attached at residues Asn463 and Asn674. Helical transmembrane passes span 743–763 (FLAL…AVVF), 785–805 (FYGL…LGSW), 859–881 (LTGS…IALS), 888–910 (IALV…VITM), 971–991 (LWLA…YWWG), and 1005–1025 (FFIV…MFTL). Positions 743-1031 (FLALTSAFVV…MFTLAPDVSR (289 aa)) constitute an ABC transmembrane type-1 2 domain. Asn1050 carries N-linked (GlcNAc...) asparagine glycosylation. Residues 1054 to 1081 (PCQHLKPGNDLEANAEPREKRPDQSQGG) are disordered. Residues 1084–1323 (VSLNNVKFSY…SESYKINALH (240 aa)) form the ABC transporter 2 domain. Residue 1119–1126 (GPSGAGKS) participates in ATP binding.

Belongs to the ABC transporter superfamily. ABCB family. Multidrug resistance exporter (TC 3.A.1.201) subfamily.

It localises to the membrane. ABC transporter; part of the gene cluster that mediates the biosynthesis of hydroxamate-containing siderophores that play a critical role in virulence via intracellular iron acquisition during macrophage infection. Probably involved in the excretion of the extracellular siderophores. This Ajellomyces capsulatus (Darling's disease fungus) protein is ABC transporter 1.